A 1280-amino-acid polypeptide reads, in one-letter code: Clustered mitochondria protein homolog (1280 aa).

Polar residues predominate over residues 1–27 (MAASSNDASKSAMANSNVTTEVAQTPS). Disordered regions lie at residues 1–49 (MAAS…GQLP) and 169–189 (GLDQSGKPKEDGPEQSPLADY). Over residues 32–43 (VNGEVEATEEDG) the composition is skewed to acidic residues. A Clu domain is found at 338-582 (DLARTQESYL…RLTPLDVAWI (245 aa)). Disordered regions lie at residues 633–669 (KANKARGGRRRLPKAQKKADAGKEVDGEKKAEAEPEQ), 905–943 (GAAVPTPAAPQTNGSSTSSKKKKNKTITPPRADSPAVSL), and 1214–1280 (TGRN…TQKP). Basic residues predominate over residues 635–648 (NKARGGRRRLPKAQ). Positions 649–669 (KKADAGKEVDGEKKAEAEPEQ) are enriched in basic and acidic residues. Residues 1221-1235 (PAAATPSVSDAAAAA) show a composition bias toward low complexity. Over residues 1245 to 1261 (VDQRKIEDLLKYIEGES) the composition is skewed to basic and acidic residues. Basic residues predominate over residues 1265 to 1280 (PTKKRTQNPRKRTQKP).

This sequence belongs to the CLU family. As to quaternary structure, may associate with the eukaryotic translation initiation factor 3 (eIF-3) complex.

The protein localises to the cytoplasm. Functionally, mRNA-binding protein involved in proper cytoplasmic distribution of mitochondria. In Phaeosphaeria nodorum (strain SN15 / ATCC MYA-4574 / FGSC 10173) (Glume blotch fungus), this protein is Clustered mitochondria protein homolog.